The primary structure comprises 854 residues: MSKNWFPLLCASVLVVYVSIASSSTGTASGAVTPTSPTENTTGPLIENTTLRTHEVFKINMSKFPYRVCSMAQGTDLLRFEQNINCDSFKPTKEDFEEGIMVVYKRDIRPYTFKVHMYQKILTFRQSYSFIRENHLLGFSQEHLAVPMWEVHYINKLNRCYNSVVRNVAGATYVNYHRDSYVNETMLLVEDDFSNTHSSRFVTVKELWHKPGSTWLYTTSCNVNCMVTVTTARSKYPYDFFVTSDGKVVDISPFYNGSNNKHFGENRDKFSVRKNYSMIAYYGRDNAPEVAHPLVGFFERPDVLMSWDIVEEANNTCEYTFWEQSERTIRSEADDTYHYTSSSMTATFLTSKEELNESDPSFQCIKDKANEQLQLIFNTSYNETYVQSGNVSMYETTGGLIVFWLPVKEKSILEMEELAVAYNNTNSSTRRKRSTDSASDSNKTSEEVLKSIVYAQLQYTYDTLRNYINRALRQIAEAWCKDQKRTLEVFKELSKINPSAMLSAIYDKPIAARFVGDVISLAKCVEVDQNSVKVLRDMRTKESGVCYSRPVVLYTFKNSSHVQYGQLGEYNEILLGRHRTEACEYPSLKIYIAGNSSYEYVDYLYKRMIPLDSISTVDTMISLDIDPLENTDFKALELYSEDELRSSNVFDLEDIMREFNTYKQRMIHVEGKVFDKVPGYLRGLDDMMSGLGSAGKALGVAIGAVGGAVASFVEGVVGFIKNPFGSFTVILFLLAVLGVIYLIYMRQKRAYEKPFEHFFPYVVPPTTVKEAPPSYEQSQYENIKEKAASATKEFSLEEAYQMLLALQKLDQEKRRKAEADDEDFASNGQSAGFLDRLRNRRRGGYQKIQNEYEV.

The N-terminal stretch at 1–30 (MSKNWFPLLCASVLVVYVSIASSSTGTASG) is a signal peptide. The Virion surface segment spans residues 31–723 (AVTPTSPTEN…EGVVGFIKNP (693 aa)). Asparagine 40, asparagine 48, and asparagine 60 each carry an N-linked (GlcNAc...) asparagine; by host glycan. Disulfide bonds link cysteine 69–cysteine 524, cysteine 86–cysteine 480, cysteine 160–cysteine 225, cysteine 317–cysteine 364, and cysteine 546–cysteine 583. The interval 127 to 133 (SYSFIRE) is involved in fusion and/or binding to host membrane. Asparagine 183 is a glycosylation site (N-linked (GlcNAc...) asparagine; by host). The interval 212–219 (GSTWLYTT) is involved in fusion and/or binding to host membrane. Residues asparagine 256, asparagine 275, asparagine 314, asparagine 356, asparagine 378, asparagine 382, asparagine 390, asparagine 423, asparagine 426, asparagine 442, asparagine 558, and asparagine 595 are each glycosylated (N-linked (GlcNAc...) asparagine; by host). Hydrophobic membrane proximal region regions lie at residues 669 to 721 (VEGK…GFIK) and 700 to 720 (VAIG…VGFI). A helical transmembrane segment spans residues 724–744 (FGSFTVILFLLAVLGVIYLIY). Topologically, residues 745 to 854 (MRQKRAYEKP…YQKIQNEYEV (110 aa)) are intravirion.

Belongs to the herpesviridae glycoprotein B family. As to quaternary structure, homotrimer; disulfide-linked. Binds to heparan sulfate proteoglycans. Interacts with gH/gL heterodimer. A proteolytic cleavage by host furin generates two subunits that remain linked by disulfide bonds.

The protein localises to the virion membrane. Its subcellular location is the host cell membrane. It is found in the host endosome membrane. The protein resides in the host Golgi apparatus membrane. Envelope glycoprotein that forms spikes at the surface of virion envelope. Essential for the initial attachment to heparan sulfate moieties of the host cell surface proteoglycans. Involved in fusion of viral and cellular membranes leading to virus entry into the host cell. Following initial binding to its host receptors, membrane fusion is mediated by the fusion machinery composed at least of gB and the heterodimer gH/gL. May be involved in the fusion between the virion envelope and the outer nuclear membrane during virion egress. This chain is Envelope glycoprotein B, found in Macaca mulatta (Rhesus macaque).